The following is a 145-amino-acid chain: Gene 34.1 protein (145 aa).

Putative excisionase. The sequence is that of Gene 34.1 protein (34.1) from Mycobacterium (Mycobacteriophage D29).